A 415-amino-acid polypeptide reads, in one-letter code: Putative transcription factor BOFH (415 aa).

The segment at 159-221 (SQEPVQHQDQ…NEGEDDDGMD (63 aa)) is disordered. Positions 174–183 (INGGGRGGYW) are enriched in gly residues. Residues 193-202 (QQQRRRKKRL) show a composition bias toward basic residues. Residues 206–220 (ETDDDGNEGEDDDGM) are compositionally biased toward acidic residues. DNA-binding regions lie at residues 234–238 (REHPF), 303–310 (NKPKMRHY), and 374–377 (YVPT).

Belongs to the FLO/LFY family. Acts in the floral primordia.

The protein resides in the nucleus. Functionally, controls floral meristem identity. Is required very early in flower development and may act here as a transcription factor. The chain is Putative transcription factor BOFH from Brassica oleracea var. botrytis (Cauliflower).